The following is a 563-amino-acid chain: Arginine--tRNA ligase (563 aa).

A 'HIGH' region motif is present at residues 121-131 (PNIAKPFSIGH).

Belongs to the class-I aminoacyl-tRNA synthetase family. In terms of assembly, monomer.

It localises to the cytoplasm. It catalyses the reaction tRNA(Arg) + L-arginine + ATP = L-arginyl-tRNA(Arg) + AMP + diphosphate. In Streptococcus pneumoniae (strain P1031), this protein is Arginine--tRNA ligase.